The sequence spans 369 residues: Zeaxanthin 7,8(7',8')-cleavage dioxygenase, chromoplastic (369 aa).

Residues His62, His112, His177, and His356 each coordinate Fe cation.

This sequence belongs to the carotenoid oxygenase family. It depends on Fe(2+) as a cofactor. In the style branches.

It is found in the plastid. The protein resides in the chromoplast. It catalyses the reaction all-trans-zeaxanthin + 2 O2 = crocetin dialdehyde + 2 3beta-hydroxy-beta-cyclocitral. Its function is as follows. Cleaves zeaxanthin symmetrically at the 7-8 and 7'-8' double bonds to produce crocetin dialdehyde and hydroxy-beta-cyclocitral, two water-soluble precursors sequestred in vacuoles and involved in the synthesis of saffron pigment and aroma. The sequence is that of Zeaxanthin 7,8(7',8')-cleavage dioxygenase, chromoplastic (ZCD) from Crocus sativus (Saffron).